We begin with the raw amino-acid sequence, 212 residues long: ATP-dependent dethiobiotin synthetase BioD (212 aa).

Asp-12–Phe-17 is an ATP binding site. Thr-16 provides a ligand contact to Mg(2+). Residue Lys-33 is part of the active site. Ser-37 serves as a coordination point for substrate. Residues Asp-50, Glu-110–Gly-113, and Asn-170–Cys-171 each bind ATP. Positions 50 and 110 each coordinate Mg(2+).

Belongs to the dethiobiotin synthetase family. Homodimer. It depends on Mg(2+) as a cofactor.

Its subcellular location is the cytoplasm. It catalyses the reaction (7R,8S)-7,8-diammoniononanoate + CO2 + ATP = (4R,5S)-dethiobiotin + ADP + phosphate + 3 H(+). It functions in the pathway cofactor biosynthesis; biotin biosynthesis; biotin from 7,8-diaminononanoate: step 1/2. Its function is as follows. Catalyzes a mechanistically unusual reaction, the ATP-dependent insertion of CO2 between the N7 and N8 nitrogen atoms of 7,8-diaminopelargonic acid (DAPA, also called 7,8-diammoniononanoate) to form a ureido ring. This is ATP-dependent dethiobiotin synthetase BioD from Legionella pneumophila (strain Paris).